Here is a 255-residue protein sequence, read N- to C-terminus: Probable esterase ATEG_07663 (255 aa).

Catalysis depends on charge relay system residues Ser-122, Asp-200, and His-227.

It belongs to the LovG family.

Probable esterase; part of the cluster B that mediates the biosynthesis of azasperpyranones, members of the azaphilone family that exhibit anti-cancer activities. Azasperpyranones are synthesized by 2 clusters, A and B. Cluster A is responsible for the production of the polyhydric phenol moiety while the azaphilonoid scaffold is produced by the cluster B. The non-reducing polyketide synthase ATEG_03629 produces 5-methyl orsellinic acid, which is then reduced to 5-methyl orsellinic aldehyde by the NRPS-like protein ATEG_03630. 5-methyl orsellinic aldehyde is then first hydroxylated by the FAD-dependent monooxygenase ATEG_03635 and subsequently hydroxylated by the cytochrome P450 monooxygenase ATEG_03631 to produce the unstable polyhydric phenol precursor of azasperpyranones. On the other hand, the polyketide synthase ATEG_07659 is responsible for producing the 3,5-dimethyloctadienone moiety from acetyl-CoA, three malonyl-CoA, and two S-adenosyl methionines (SAM). The 3,5-dimethyloctadienone moiety is then loaded onto the SAT domain of ATEG_07661 and extended with four malonyl-CoA and one SAM, which leads to the formation of 2,4-dihydroxy-6-(5,7-dimethyl-2-oxo-trans-3-trans-5-nonadienyl)-3-methylbenzaldehyde (compound 8) after reductive release and aldol condensation. The FAD-dependent monooxygenase ATEG_07662 is the next enzyme in the biosynthesis sequence and hydroxylates the side chain at the benzylic position of compound 8. In Aspergillus nidulans, afoF, the ortholog of the FAD-dependent oxygenase ATEG_07660, is the key enzyme for the biosynthesis of asperfuranone by catalyzing the hydroxylation at C-8 of to prevent the formation of a six-membered ring hemiacetal intermediate and thus facilitating the formation of a five-membered ring to produce asperfuranone. In Aspergillus terreus, ATEG_07660 is probably not functional, which leads to the formation of the six-membered ring hemiacetal intermediate presperpyranone instead of asperfuranone. Finally, ATEG_03636 is involved in the condensation of the polyhydric phenol moiety produced by cluster A and the perasperpyranone precursor produced by cluster B, to yield azasperpyranone A. Further modifications of azasperpyranone A result in the production of derivatives, including azasperpyranone B to F. This Aspergillus terreus (strain NIH 2624 / FGSC A1156) protein is Probable esterase ATEG_07663.